A 143-amino-acid chain; its full sequence is Nucleoside diphosphate kinase (143 aa).

The ATP site is built by lysine 11, phenylalanine 59, arginine 87, threonine 93, arginine 104, and asparagine 114. Histidine 117 functions as the Pros-phosphohistidine intermediate in the catalytic mechanism.

It belongs to the NDK family. Homotetramer. It depends on Mg(2+) as a cofactor.

It localises to the cytoplasm. The enzyme catalyses a 2'-deoxyribonucleoside 5'-diphosphate + ATP = a 2'-deoxyribonucleoside 5'-triphosphate + ADP. It carries out the reaction a ribonucleoside 5'-diphosphate + ATP = a ribonucleoside 5'-triphosphate + ADP. Functionally, major role in the synthesis of nucleoside triphosphates other than ATP. The ATP gamma phosphate is transferred to the NDP beta phosphate via a ping-pong mechanism, using a phosphorylated active-site intermediate. The protein is Nucleoside diphosphate kinase of Idiomarina loihiensis (strain ATCC BAA-735 / DSM 15497 / L2-TR).